The following is a 461-amino-acid chain: Serine incorporator 5 (461 aa).

The Extracellular portion of the chain corresponds to 1–36 (MSARCCAGQLACCCGSAGCSLCCGCCPKFRQSRTTR). A helical membrane pass occupies residues 37–57 (FMYLFYFILVIALCCVMMTPS). Topologically, residues 58–90 (VMKQVKDHIPFFEEFCKKTQAGGDACENLVGYS) are cytoplasmic. The helical transmembrane segment at 91-111 (AVYRVCFGMACFFALFCLLTL) threads the bilayer. Topologically, residues 112–125 (KVNNSKSCRAYIHN) are extracellular. N-linked (GlcNAc...) asparagine glycosylation is present at Asn-114. The helical transmembrane segment at 126–146 (GFWFFKLLLLGAMCSGAFFIP) threads the bilayer. Topologically, residues 147-157 (DQETFLKVWRY) are cytoplasmic. The helical transmembrane segment at 158-178 (VGAGGSFLFICIQLLLIVQFA) threads the bilayer. The Extracellular segment spans residues 179–200 (HKWNKNWTAGTVRNKLWYASLS). An N-linked (GlcNAc...) asparagine glycan is attached at Asn-184. Residues 201-221 (LVTLIMYSVAVGGLALMAVFY) traverse the membrane as a helical segment. At 222 to 231 (TQWDDCMDNK) the chain is on the cytoplasmic side. A helical membrane pass occupies residues 232–252 (ILLGVHGGLCVLISLVAISPC). At 253-260 (VQNRQPHS) the chain is on the extracellular side. The helical transmembrane segment at 261–281 (GLLQSGLISCYVTYLTFSALT) threads the bilayer. Topologically, residues 282 to 312 (SKPEKKVLDEHGKNVTICAPDFGQDLHRDEN) are cytoplasmic. Residues 313–333 (MVTWLGTLLLIVCISYSCLTS) form a helical membrane-spanning segment. The Extracellular segment spans residues 334-392 (TTRSSSDALQSRYGAPELEVARCCFCFGPDGEDTEEQQNVKKGPRVIYDEKKGTVYSYS). The helical transmembrane segment at 393 to 413 (YFHFVFFLASLYVMMTLTSWF) threads the bilayer. The Cytoplasmic segment spans residues 414–422 (HYENATIKT). A helical membrane pass occupies residues 423–443 (FFSGWSVFWVKMASCWMCVLL). The Extracellular portion of the chain corresponds to 444 to 461 (YLQTLVAPLCCPSRQFSV).

Belongs to the TDE1 family.

It localises to the cell membrane. It catalyses the reaction a 1,2-diacyl-sn-glycero-3-phospho-L-serine(in) = a 1,2-diacyl-sn-glycero-3-phospho-L-serine(out). It carries out the reaction a 1,2-diacyl-sn-glycero-3-phosphocholine(in) = a 1,2-diacyl-sn-glycero-3-phosphocholine(out). The catalysed reaction is a 1,2-diacyl-sn-glycero-3-phosphoethanolamine(in) = a 1,2-diacyl-sn-glycero-3-phosphoethanolamine(out). Restriction factor required to restrict infectivity of gammaretroviruses: acts by inhibiting an early step of viral infection. Impairs the penetration of the viral particle into the cytoplasm. Non-ATP-dependent, non-specific lipid transporter for phosphatidylserine, phosphatidylcholine, and phosphatidylethanolamine. Functions as a scramblase that flips lipids in both directions across the membrane. Phospholipid scrambling results in gammaretroviral surface exposure of phosphatidylserine and loss of membrane asymmetry, which leads to loss of infectivity. Enhances the incorporation of serine into phosphatidylserine and sphingolipids. May play a role in providing serine molecules for the formation of myelin glycosphingolipids in oligodendrocytes. The protein is Serine incorporator 5 (Serinc5) of Mus musculus (Mouse).